Consider the following 653-residue polypeptide: Amyloid beta A4 precursor protein-binding family B member 1-interacting protein (653 aa).

The disordered stretch occupies residues asparagine 82–glutamate 141. The span at leucine 116–leucine 134 shows a compositional bias: pro residues. The region spanning lysine 165–tyrosine 253 is the Ras-associating domain. Residues valine 295–tyrosine 404 form the PH domain. Positions lysine 462–threonine 481 are enriched in basic and acidic residues. A disordered region spans residues lysine 462 to threonine 653. Over residues proline 585–proline 604 the composition is skewed to pro residues. The segment covering valine 605–lysine 614 has biased composition (basic residues).

This sequence belongs to the MRL family.

Its subcellular location is the cell membrane. The protein localises to the cytoplasm. It localises to the cytoskeleton. In terms of biological role, appears to function in the signal transduction from Ras activation to actin cytoskeletal remodeling. The sequence is that of Amyloid beta A4 precursor protein-binding family B member 1-interacting protein (apbb1ip) from Xenopus laevis (African clawed frog).